The following is a 167-amino-acid chain: UPF0179 protein Pars_2336 (167 aa).

Belongs to the UPF0179 family.

The sequence is that of UPF0179 protein Pars_2336 from Pyrobaculum arsenaticum (strain DSM 13514 / JCM 11321 / PZ6).